A 106-amino-acid polypeptide reads, in one-letter code: MIVTTTPSIEGKKIVEYKGIVSSEVIVGVNLVKDFIASITDIFGGRSGTYENELIRAREEALQELQNRAAMLGANAVVGIDIDYEVLGANGSMLMVSVTGTAVVVE.

The protein belongs to the UPF0145 family.

The protein is UPF0145 protein Athe_0545 of Caldicellulosiruptor bescii (strain ATCC BAA-1888 / DSM 6725 / KCTC 15123 / Z-1320) (Anaerocellum thermophilum).